A 374-amino-acid chain; its full sequence is Quinolinate synthase (374 aa).

Residues histidine 53 and serine 70 each contribute to the iminosuccinate site. Cysteine 116 contacts [4Fe-4S] cluster. Iminosuccinate is bound by residues 148–150 (YMN) and serine 169. Cysteine 236 lines the [4Fe-4S] cluster pocket. Residues 262 to 264 (HPE) and threonine 279 contribute to the iminosuccinate site. Cysteine 327 contacts [4Fe-4S] cluster.

The protein belongs to the quinolinate synthase family. Type 3 subfamily. [4Fe-4S] cluster is required as a cofactor.

It is found in the cytoplasm. It catalyses the reaction iminosuccinate + dihydroxyacetone phosphate = quinolinate + phosphate + 2 H2O + H(+). The protein operates within cofactor biosynthesis; NAD(+) biosynthesis; quinolinate from iminoaspartate: step 1/1. Its function is as follows. Catalyzes the condensation of iminoaspartate with dihydroxyacetone phosphate to form quinolinate. The polypeptide is Quinolinate synthase (Halobacterium salinarum (strain ATCC 29341 / DSM 671 / R1)).